A 227-amino-acid chain; its full sequence is Ribose-5-phosphate isomerase A (227 aa).

Substrate-binding positions include Thr-28–Thr-31, Asp-84–Asp-87, and Lys-97–Gly-100. The active-site Proton acceptor is Glu-106. A substrate-binding site is contributed by Lys-124.

This sequence belongs to the ribose 5-phosphate isomerase family. Homodimer.

The catalysed reaction is aldehydo-D-ribose 5-phosphate = D-ribulose 5-phosphate. It functions in the pathway carbohydrate degradation; pentose phosphate pathway; D-ribose 5-phosphate from D-ribulose 5-phosphate (non-oxidative stage): step 1/1. Its function is as follows. Catalyzes the reversible conversion of ribose-5-phosphate to ribulose 5-phosphate. The chain is Ribose-5-phosphate isomerase A from Lactiplantibacillus plantarum (strain ATCC BAA-793 / NCIMB 8826 / WCFS1) (Lactobacillus plantarum).